The primary structure comprises 547 residues: DNA mismatch repair protein MutL (547 aa).

This sequence belongs to the DNA mismatch repair MutL/HexB family.

Its function is as follows. This protein is involved in the repair of mismatches in DNA. It is required for dam-dependent methyl-directed DNA mismatch repair. May act as a 'molecular matchmaker', a protein that promotes the formation of a stable complex between two or more DNA-binding proteins in an ATP-dependent manner without itself being part of a final effector complex. In Deinococcus radiodurans (strain ATCC 13939 / DSM 20539 / JCM 16871 / CCUG 27074 / LMG 4051 / NBRC 15346 / NCIMB 9279 / VKM B-1422 / R1), this protein is DNA mismatch repair protein MutL.